A 300-amino-acid chain; its full sequence is tRNA dimethylallyltransferase (300 aa).

Position 9–16 (9–16 (GTTASGKS)) interacts with ATP. 11 to 16 (TASGKS) serves as a coordination point for substrate. An interaction with substrate tRNA region spans residues 34-37 (DSLC).

The protein belongs to the IPP transferase family. In terms of assembly, monomer. Requires Mg(2+) as cofactor.

The catalysed reaction is adenosine(37) in tRNA + dimethylallyl diphosphate = N(6)-dimethylallyladenosine(37) in tRNA + diphosphate. In terms of biological role, catalyzes the transfer of a dimethylallyl group onto the adenine at position 37 in tRNAs that read codons beginning with uridine, leading to the formation of N6-(dimethylallyl)adenosine (i(6)A). This Campylobacter fetus subsp. fetus (strain 82-40) protein is tRNA dimethylallyltransferase.